The chain runs to 59 residues: UPF0434 protein HEAR2489 (59 aa).

This sequence belongs to the UPF0434 family.

This is UPF0434 protein HEAR2489 from Herminiimonas arsenicoxydans.